A 497-amino-acid polypeptide reads, in one-letter code: 5'-AMP-activated protein kinase subunit gamma-3 (497 aa).

The tract at residues 16–143 is disordered; the sequence is STQTPSWSSF…SSSSTDDLDQ (128 aa). Residues 39 to 54 show a composition bias toward polar residues; sequence GDSTSWPSPAMTTSAE. Over residues 68–79 the composition is skewed to basic and acidic residues; the sequence is KSQEDVEERELP. CBS domains lie at 204–265, 287–345, and 363–423; these read MATS…RSPL, CFKP…QRTL, and TFRD…HLDI. ADP is bound by residues Arg-232, 247–252, Val-292, 313–314, and Lys-332; these read MLTITD and HR. AMP is bound by residues Arg-232, 247–252, Val-292, His-313, 313–314, Lys-332, Thr-363, Ala-368, 389–390, 405–408, Arg-432, Leu-440, His-461, 461–462, and 477–480; these read MLTITD, HR, SA, SRFD, and SLSD. Residues Arg-232, 247 to 252, Val-292, 313 to 314, Arg-314, and Lys-332 contribute to the ATP site; these read MLTITD and HR. Positions 300 to 321 match the AMPK pseudosubstrate motif; that stretch reads LFEAVYTLIKNRIHRLPVLDPV. ADP contacts are provided by residues 405–408, Arg-432, Leu-440, and 461–462; these read SRFD and HR. ATP contacts are provided by residues 405 to 408, Arg-432, Leu-440, and 461 to 462; these read SRFD and HR. The CBS 4 domain maps to 435–494; it reads CLEGVLSCQPHETLGEVIDRIAREQVHRLVLVDETQHLLGVVSLSDILQALVLSPAGIDA.

It belongs to the 5'-AMP-activated protein kinase gamma subunit family. In terms of assembly, AMPK is a heterotrimer of an alpha catalytic subunit (PRKAA1 or PRKAA2), a beta (PRKAB1 or PRKAB2) and a gamma non-catalytic subunits (PRKAG1, PRKAG2 or PRKAG3). Interacts with FNIP1 and FNIP2. Post-translationally, phosphorylated by ULK1; leading to negatively regulate AMPK activity and suggesting the existence of a regulatory feedback loop between ULK1 and AMPK. In terms of processing, glycosylated; O-GlcNAcylated by OGT, promoting the AMP-activated protein kinase (AMPK) activity.

Functionally, AMP/ATP-binding subunit of AMP-activated protein kinase (AMPK), an energy sensor protein kinase that plays a key role in regulating cellular energy metabolism. In response to reduction of intracellular ATP levels, AMPK activates energy-producing pathways and inhibits energy-consuming processes: inhibits protein, carbohydrate and lipid biosynthesis, as well as cell growth and proliferation. AMPK acts via direct phosphorylation of metabolic enzymes, and by longer-term effects via phosphorylation of transcription regulators. AMPK also acts as a regulator of cellular polarity by remodeling the actin cytoskeleton; probably by indirectly activating myosin. The AMPK gamma3 subunit is a non-catalytic subunit with a regulatory role in muscle energy metabolism. It mediates binding to AMP, ADP and ATP, leading to AMPK activation or inhibition: AMP-binding results in allosteric activation of alpha catalytic subunit (PRKAA1 or PRKAA2) both by inducing phosphorylation and preventing dephosphorylation of catalytic subunits. ADP also stimulates phosphorylation, without stimulating already phosphorylated catalytic subunit. ATP promotes dephosphorylation of catalytic subunit, rendering the AMPK enzyme inactive. This Bos taurus (Bovine) protein is 5'-AMP-activated protein kinase subunit gamma-3 (PRKAG3).